Consider the following 138-residue polypeptide: Basic phospholipase A2 BP-III (138 aa).

Positions 1 to 16 are cleaved as a signal peptide; it reads MRTLWIMAVLLVGVDG. Intrachain disulfides connect cysteine 42–cysteine 132, cysteine 44–cysteine 60, cysteine 59–cysteine 112, cysteine 65–cysteine 138, cysteine 66–cysteine 105, cysteine 73–cysteine 98, and cysteine 91–cysteine 103. Ca(2+) contacts are provided by glycine 45 and glycine 47. Histidine 63 is a catalytic residue. Aspartate 106 is a catalytic residue.

Belongs to the phospholipase A2 family. Group II subfamily. K49 sub-subfamily. Ca(2+) is required as a cofactor. As to expression, expressed by the venom gland.

The protein localises to the secreted. The enzyme catalyses a 1,2-diacyl-sn-glycero-3-phosphocholine + H2O = a 1-acyl-sn-glycero-3-phosphocholine + a fatty acid + H(+). Its function is as follows. Snake venom phospholipase A2 (PLA2) that has low phospholipase A2 activity. Shows anticoagulant activities, strong myolytic activity, infiltration of polymorphonuclear cells, and edema in stromal tissues. Induces cell death of Jurkat cells in a concentration dependent manner. PLA2 catalyzes the calcium-dependent hydrolysis of the 2-acyl groups in 3-sn-phosphoglycerides. This is Basic phospholipase A2 BP-III from Protobothrops flavoviridis (Habu).